The primary structure comprises 369 residues: Glycolate oxidase 1 (369 aa).

Residues 1–360 enclose the FMN hydroxy acid dehydrogenase domain; sequence MGEITNVMEY…TRAHIYTDAD (360 aa). Residue Tyr25 coordinates glyoxylate. FMN contacts are provided by residues 78-80, Ser107, 128-130, and Thr156; these read PSA and QLY. Tyr130 serves as a coordination point for glyoxylate. Arg165 is a glyoxylate binding site. The FMN site is built by Lys231 and Ser253. Glyoxylate is bound by residues His255 and Arg258. His255 (proton acceptor) is an active-site residue. Residues 286-290 and 309-310 contribute to the FMN site; these read DGGVR and GR. The Microbody targeting signal signature appears at 367–369; sequence PRL.

Belongs to the FMN-dependent alpha-hydroxy acid dehydrogenase family. Homotetramer. Interacts with rice dwarf virus (RDV) P8. This interaction promotes viral P8 relocation to virus factories peripheral to peroxisomes. FMN is required as a cofactor.

It localises to the peroxisome. The catalysed reaction is glycolate + O2 = glyoxylate + H2O2. Its pathway is photosynthesis; photorespiration; glycine from 2-phosphoglycolate: step 2/3. In terms of biological role, catalyzes the oxidation of glycolate to glyoxylate, with a reduction of O2 to H2O2. Is a key enzyme in photorespiration in plants. Can exert a strong regulation over photosynthesis, possibly through a feed-back inhibition on Rubisco activase. Does not seem to play a role in oxalate accumulation. This is Glycolate oxidase 1 (GLO1) from Oryza sativa subsp. indica (Rice).